A 272-amino-acid chain; its full sequence is F-actin-capping protein subunit beta (272 aa).

Residue serine 2 is modified to N-acetylserine. Serine 2 is modified (phosphoserine). Lysine 235 carries the post-translational modification N6-acetyllysine. Valine 263 bears the Phosphoserine mark.

It belongs to the F-actin-capping protein beta subunit family. Component of the F-actin capping complex, composed of a heterodimer of an alpha and a beta subunit. Subunit of dynactin, a multiprotein complex part of a tripartite complex with dynein and a adapter, such as BICDL1, BICD2 or HOOK3. The dynactin complex is built around ACTR1A/ACTB filament and consists of an actin-related filament composed of a shoulder domain, a pointed end and a barbed end. Its length is defined by its flexible shoulder domain. The soulder is composed of 2 DCTN1 subunits, 4 DCTN2 and 2 DCTN3. The 4 DCNT2 (via N-terminus) bind the ACTR1A filament and act as molecular rulers to determine the length. The pointed end is important for binding dynein-dynactin cargo adapters. Consists of 4 subunits: ACTR10, DCNT4, DCTN5 and DCTN6. The barbed end is composed of a CAPZA1:CAPZB heterodimers, which binds ACTR1A/ACTB filament and dynactin and stabilizes dynactin. Interacts with ARHGAP17. Interaction with RCSD1/CAPZIP. Component of the WASH complex, composed of F-actin-capping protein subunit alpha (CAPZA1, CAPZA2 or CAPZA3), F-actin-capping protein subunit beta (CAPZB), WASH (WASHC1, WASH2P, WASH3P, WASH4P, WASH5P or WASH6P), WASHC2 (WASHC2A or WASHC2C), WASHC3, WASHC4 and WASHC5. Interacts with ACTG1. Directly interacts with CRACD; this interaction decreases binding to actin.

Its subcellular location is the cytoplasm. It is found in the cytoskeleton. The protein resides in the myofibril. It localises to the sarcomere. In terms of biological role, F-actin-capping proteins bind in a Ca(2+)-independent manner to the fast growing ends of actin filaments (barbed end) thereby blocking the exchange of subunits at these ends. Unlike other capping proteins (such as gelsolin and severin), these proteins do not sever actin filaments. Plays a role in the regulation of cell morphology and cytoskeletal organization. Forms, with CAPZB, the barbed end of the fast growing ends of actin filaments in the dynactin complex and stabilizes dynactin structure. The dynactin multiprotein complex activates the molecular motor dynein for ultra-processive transport along microtubules. In Homo sapiens (Human), this protein is F-actin-capping protein subunit beta.